Consider the following 273-residue polypeptide: Formamidopyrimidine-DNA glycosylase (273 aa).

Pro-2 serves as the catalytic Schiff-base intermediate with DNA. Glu-3 serves as the catalytic Proton donor. Lys-60 acts as the Proton donor; for beta-elimination activity in catalysis. DNA contacts are provided by His-94, Arg-113, and Arg-154. The FPG-type zinc-finger motif lies at 239–273; that stretch reads NAYDREGQPCPRCGATIIKTVVAQRGTHYCPECQR. Arg-263 functions as the Proton donor; for delta-elimination activity in the catalytic mechanism.

It belongs to the FPG family. Monomer. Zn(2+) is required as a cofactor.

It carries out the reaction Hydrolysis of DNA containing ring-opened 7-methylguanine residues, releasing 2,6-diamino-4-hydroxy-5-(N-methyl)formamidopyrimidine.. The catalysed reaction is 2'-deoxyribonucleotide-(2'-deoxyribose 5'-phosphate)-2'-deoxyribonucleotide-DNA = a 3'-end 2'-deoxyribonucleotide-(2,3-dehydro-2,3-deoxyribose 5'-phosphate)-DNA + a 5'-end 5'-phospho-2'-deoxyribonucleoside-DNA + H(+). Functionally, involved in base excision repair of DNA damaged by oxidation or by mutagenic agents. Acts as a DNA glycosylase that recognizes and removes damaged bases. Has a preference for oxidized purines, such as 7,8-dihydro-8-oxoguanine (8-oxoG). Has AP (apurinic/apyrimidinic) lyase activity and introduces nicks in the DNA strand. Cleaves the DNA backbone by beta-delta elimination to generate a single-strand break at the site of the removed base with both 3'- and 5'-phosphates. In Roseiflexus sp. (strain RS-1), this protein is Formamidopyrimidine-DNA glycosylase.